A 337-amino-acid chain; its full sequence is AP2/ERF and B3 domain-containing transcription factor At1g50680 (337 aa).

Positions 27 to 84 (KYKGVVQQQNGHWGAQIYADHKRIWLGTFKSADEAATAYDSASIKLRSFDANSHRNFP) form a DNA-binding region, AP2/ERF. The TF-B3 DNA-binding region spans 157-271 (FQKELTPSDV…VKTLEGQRKN (115 aa)).

Belongs to the AP2/ERF transcription factor family. RAV subfamily.

The protein localises to the nucleus. Its function is as follows. Probably acts as a transcriptional activator. Binds to the GCC-box pathogenesis-related promoter element. May be involved in the regulation of gene expression by stress factors and by components of stress signal transduction pathways. The chain is AP2/ERF and B3 domain-containing transcription factor At1g50680 from Arabidopsis thaliana (Mouse-ear cress).